We begin with the raw amino-acid sequence, 89 residues long: MSDRKAVIKNADMSEEMQQDAVDCATQALEKYNIEKDIAAFIKKEFDKKYNPTWHCIVGRNFGSYVTHETRHFIYFYLGQVAILLFKSG.

This sequence belongs to the dynein light chain family.

The protein localises to the cytoplasm. The protein resides in the cytoskeleton. Functionally, acts as a non-catalytic accessory component of a dynein complex. The sequence is that of Dynein light chain 2, cytoplasmic (Cdlc2) from Drosophila melanogaster (Fruit fly).